The primary structure comprises 60 residues: MAVPRRKTSPSRRGMRRSADAIKKPTYVEDKDSGELRRPHHLDLKTGMYKGRQVLKKKES.

The segment covering Met-1–Arg-16 has biased composition (basic residues). Residues Met-1–Ser-60 form a disordered region. Over residues Arg-17–Leu-44 the composition is skewed to basic and acidic residues.

The protein belongs to the bacterial ribosomal protein bL32 family.

This is Large ribosomal subunit protein bL32 from Bradyrhizobium diazoefficiens (strain JCM 10833 / BCRC 13528 / IAM 13628 / NBRC 14792 / USDA 110).